Reading from the N-terminus, the 367-residue chain is Germination protease (367 aa).

A propeptide spanning residues 1–13 is cleaved from the precursor; it reads MEEQQIPFQVRTD. Residues 267 to 287 are disordered; the sequence is KDDPSKSLTPAGMSFGNRKLT.

Belongs to the peptidase A25 family. As to quaternary structure, homotetramer. Post-translationally, autoproteolytically processed. The inactive tetrameric zymogen termed p46 autoprocesses to a smaller form termed p41, which is active only during spore germination.

It carries out the reaction Endopeptidase action with P4 Glu or Asp, P1 preferably Glu &gt; Asp, P1' hydrophobic and P2' Ala.. In terms of biological role, initiates the rapid degradation of small, acid-soluble proteins during spore germination. In Oceanobacillus iheyensis (strain DSM 14371 / CIP 107618 / JCM 11309 / KCTC 3954 / HTE831), this protein is Germination protease.